A 50-amino-acid chain; its full sequence is Photosystem II reaction center protein M (50 aa).

The helical transmembrane segment at 6–26 (FGFVASLLFVGVPTIFLIGLF) threads the bilayer.

This sequence belongs to the PsbM family. PSII is composed of 1 copy each of membrane proteins PsbA, PsbB, PsbC, PsbD, PsbE, PsbF, PsbH, PsbI, PsbJ, PsbK, PsbL, PsbM, PsbT, PsbX, PsbY, Psb30/Ycf12, peripheral proteins PsbO, CyanoQ (PsbQ), PsbU, PsbV and a large number of cofactors. It forms dimeric complexes.

It localises to the cellular thylakoid membrane. Its function is as follows. One of the components of the core complex of photosystem II (PSII). PSII is a light-driven water:plastoquinone oxidoreductase that uses light energy to abstract electrons from H(2)O, generating O(2) and a proton gradient subsequently used for ATP formation. It consists of a core antenna complex that captures photons, and an electron transfer chain that converts photonic excitation into a charge separation. This subunit is found at the monomer-monomer interface. This Prochlorococcus marinus (strain MIT 9215) protein is Photosystem II reaction center protein M.